A 341-amino-acid polypeptide reads, in one-letter code: UDP-N-acetylenolpyruvoylglucosamine reductase (341 aa).

Residues 19 to 191 (MAVRAAHFCQ…TAVRFRLSRR (173 aa)) form the FAD-binding PCMH-type domain. Arg-167 is an active-site residue. Ser-241 serves as the catalytic Proton donor. Glu-337 is a catalytic residue.

Belongs to the MurB family. It depends on FAD as a cofactor.

Its subcellular location is the cytoplasm. The enzyme catalyses UDP-N-acetyl-alpha-D-muramate + NADP(+) = UDP-N-acetyl-3-O-(1-carboxyvinyl)-alpha-D-glucosamine + NADPH + H(+). Its pathway is cell wall biogenesis; peptidoglycan biosynthesis. Its function is as follows. Cell wall formation. This Chromobacterium violaceum (strain ATCC 12472 / DSM 30191 / JCM 1249 / CCUG 213 / NBRC 12614 / NCIMB 9131 / NCTC 9757 / MK) protein is UDP-N-acetylenolpyruvoylglucosamine reductase.